A 147-amino-acid chain; its full sequence is Calcium-regulated heat-stable protein 1 (147 aa).

Pro residues predominate over residues Met1–Pro12. Residues Met1–Ser52 form a disordered region. Ser2 is subject to N-acetylserine. Phosphoserine occurs at positions 30, 32, and 41. The residue at position 45 (Thr45) is a Phosphothreonine. 2 positions are modified to phosphoserine: Ser52 and Ser58. One can recognise a CSD domain in the interval Val62 to Thr129. 2 positions are modified to phosphoserine: Ser146 and Ser147.

In terms of assembly, homodimer. Interacts with STYX. In terms of processing, dephosphorylated by calcineurin in a Ca(2+) dependent manner. Can be phosphorylated by DYRK2 (in vitro).

Its subcellular location is the cytoplasm. It is found in the P-body. The protein resides in the cytoplasmic granule. Its function is as follows. Binds mRNA and regulates the stability of target mRNA. Binds single-stranded DNA (in vitro). The protein is Calcium-regulated heat-stable protein 1 (CARHSP1) of Homo sapiens (Human).